The sequence spans 291 residues: Segregation and condensation protein B (291 aa).

Belongs to the ScpB family. In terms of assembly, homodimer. Homodimerization may be required to stabilize the binding of ScpA to the Smc head domains. Component of a cohesin-like complex composed of ScpA, ScpB and the Smc homodimer, in which ScpA and ScpB bind to the head domain of Smc. The presence of the three proteins is required for the association of the complex with DNA.

It localises to the cytoplasm. Its function is as follows. Participates in chromosomal partition during cell division. May act via the formation of a condensin-like complex containing Smc and ScpA that pull DNA away from mid-cell into both cell halves. The polypeptide is Segregation and condensation protein B (Mycoplasmoides gallisepticum (strain R(low / passage 15 / clone 2)) (Mycoplasma gallisepticum)).